The chain runs to 257 residues: AN1-type zinc finger protein 2B (257 aa).

AN1-type zinc fingers lie at residues 4–52 and 94–142; these read PDLG…QKDI and KIFT…HPTS. Zn(2+) is bound by residues C10, C15, C25, C28, C33, H36, H42, C44, C100, C105, C115, C118, C123, H126, H132, and C134. The VCP/p97-interacting motif (VIM) stretch occupies residues 141-151; the sequence is TSRAGLAAISR. The disordered stretch occupies residues 153-187; sequence QGLASTSTVPSPSRTLPSSSSPSRATPQLPPRTTS. Over residues 156–179 the composition is skewed to low complexity; the sequence is ASTSTVPSPSRTLPSSSSPSRATP. A phosphoserine mark is found at S163, S173, and S187. 2 consecutive UIM domains span residues 197–216 and 221–240; these read SEDEALQRALELSLAEAKPQ and QEEEDLALAQALSASEAEYQ. Position 254 is a cysteine methyl ester (C254). C254 carries S-geranylgeranyl cysteine lipidation. A CAAX motif motif is present at residues 254-257; sequence CSLC. Residues 255 to 257 constitute a propeptide, removed in mature form; the sequence is SLC.

As to quaternary structure, binds 'Lys-48'-linked polyubiquitin chains of ubiquitinated proteins. Associates with the proteasome complex; upon exposure to arsenite. Interacts (via VIM motif) with VCP; the interaction is direct. Interacts with BAG6. Interacts with IGF1R (nascent precursor form). Interacts with DERL1, FAF2, NPLOC4 and UFD1; probably through VCP. Phosphorylated by MAPK14. Phosphorylation has no effect on association with the proteasome complex.

It localises to the endoplasmic reticulum membrane. In terms of biological role, plays a role in protein homeostasis by regulating both the translocation and the ubiquitin-mediated proteasomal degradation of nascent proteins at the endoplasmic reticulum. It is involved in the regulation of signal-mediated translocation of proteins into the endoplasmic reticulum. It also plays a role in the ubiquitin-mediated proteasomal degradation of proteins for which signal-mediated translocation to the endoplasmic reticulum has failed. May therefore function in the endoplasmic reticulum stress-induced pre-emptive quality control, a mechanism that selectively attenuates the translocation of newly synthesized proteins into the endoplasmic reticulum and reroutes them to the cytosol for proteasomal degradation. By controlling the steady-state expression of the IGF1R receptor, indirectly regulates the insulin-like growth factor receptor signaling pathway. The sequence is that of AN1-type zinc finger protein 2B from Rattus norvegicus (Rat).